A 227-amino-acid chain; its full sequence is Ribonuclease 3 (227 aa).

Residues 4 to 126 form the RNase III domain; sequence LDRLERKIGY…IIGAMSLDQG (123 aa). E39 contacts Mg(2+). Residue D43 is part of the active site. The Mg(2+) site is built by D112 and E115. The active site involves E115. The region spanning 153–226 is the DRBM domain; it reads DAKTRLQEYL…AEQILKELDI (74 aa).

This sequence belongs to the ribonuclease III family. In terms of assembly, homodimer. The cofactor is Mg(2+).

It localises to the cytoplasm. It catalyses the reaction Endonucleolytic cleavage to 5'-phosphomonoester.. In terms of biological role, digests double-stranded RNA. Involved in the processing of primary rRNA transcript to yield the immediate precursors to the large and small rRNAs (23S and 16S). Processes some mRNAs, and tRNAs when they are encoded in the rRNA operon. Processes pre-crRNA and tracrRNA of type II CRISPR loci if present in the organism. The sequence is that of Ribonuclease 3 from Haemophilus influenzae (strain PittGG).